The primary structure comprises 238 residues: tRNA (guanine-N(7)-)-methyltransferase (238 aa).

Residues Glu-68, Glu-93, Asp-120, and Asp-143 each contribute to the S-adenosyl-L-methionine site. The active site involves Asp-143. Substrate contacts are provided by residues Lys-147, Asp-179, and 216–219; that span reads TKFE.

This sequence belongs to the class I-like SAM-binding methyltransferase superfamily. TrmB family.

It carries out the reaction guanosine(46) in tRNA + S-adenosyl-L-methionine = N(7)-methylguanosine(46) in tRNA + S-adenosyl-L-homocysteine. The protein operates within tRNA modification; N(7)-methylguanine-tRNA biosynthesis. Functionally, catalyzes the formation of N(7)-methylguanine at position 46 (m7G46) in tRNA. The chain is tRNA (guanine-N(7)-)-methyltransferase from Stutzerimonas stutzeri (strain A1501) (Pseudomonas stutzeri).